The chain runs to 777 residues: Acyl-homoserine lactone acylase PvdQ (777 aa).

Positions 1–25 (MIISRQLPSFCLAALFLSFSGGAHA) are cleaved as a signal peptide. A propeptide spans 196 to 218 (AGLPAEHWQLAAARQQRFALDRG) (spacer peptide). Ser219 serves as the catalytic Nucleophile.

It belongs to the peptidase S45 family. As to quaternary structure, heterodimer of an alpha subunit and a beta subunit processed from the same precursor.

It localises to the periplasm. It carries out the reaction an N-acyl-L-homoserine lactone + H2O = L-homoserine lactone + a carboxylate. Functionally, catalyzes the deacylation of acyl-homoserine lactone (AHL or acyl-HSL), releasing homoserine lactone (HSL) and the corresponding fatty acid. Possesses a specificity for the degradation of long-chain acyl-HSLs (side chains of 11 to 14 carbons in length). This is Acyl-homoserine lactone acylase PvdQ (pvdQ) from Pseudomonas fluorescens (strain ATCC BAA-477 / NRRL B-23932 / Pf-5).